Here is a 338-residue protein sequence, read N- to C-terminus: uncharacterized protein (338 aa).

Residues 20-40 form a helical membrane-spanning segment; sequence IFFTLTFSLSNLFLAICYLFL.

The protein resides in the membrane. This is an uncharacterized protein from Schizosaccharomyces pombe (strain 972 / ATCC 24843) (Fission yeast).